We begin with the raw amino-acid sequence, 893 residues long: TBC domain-containing protein kinase-like protein (893 aa).

A Protein kinase domain is found at 1 to 274; it reads MFPLRDTEMG…EELMHDHLFS (274 aa). Residues 466–651 form the Rab-GAP TBC domain; it reads DIPPLLRGIT…HLWDTLLLGN (186 aa). A Rhodanese domain is found at 790 to 889; the sequence is SKPKLLVVDI…IKPTGLLTVP (100 aa).

It belongs to the protein kinase superfamily. Component of the FERRY complex.

The protein localises to the cytoplasm. It localises to the cytoskeleton. The protein resides in the spindle. It is found in the midbody. Its subcellular location is the early endosome. In terms of biological role, component of the FERRY complex (Five-subunit Endosomal Rab5 and RNA/ribosome intermediary). The FERRY complex directly interacts with mRNAs and RAB5A, and functions as a RAB5A effector involved in the localization and the distribution of specific mRNAs most likely by mediating their endosomal transport. The complex recruits mRNAs and ribosomes to early endosomes through direct mRNA-interaction. Also involved in the modulation of mTOR signaling and expression of mTOR complex components. Involved in the control of actin-cytoskeleton organization. This is TBC domain-containing protein kinase-like protein from Gallus gallus (Chicken).